Consider the following 157-residue polypeptide: Cyclic pyranopterin monophosphate synthase (157 aa).

Substrate contacts are provided by residues 74 to 76 (MCH) and 110 to 111 (ME). Asp125 is an active-site residue.

This sequence belongs to the MoaC family. As to quaternary structure, homohexamer; trimer of dimers.

The catalysed reaction is (8S)-3',8-cyclo-7,8-dihydroguanosine 5'-triphosphate = cyclic pyranopterin phosphate + diphosphate. It participates in cofactor biosynthesis; molybdopterin biosynthesis. Functionally, catalyzes the conversion of (8S)-3',8-cyclo-7,8-dihydroguanosine 5'-triphosphate to cyclic pyranopterin monophosphate (cPMP). The sequence is that of Cyclic pyranopterin monophosphate synthase from Peptoclostridium acidaminophilum (Eubacterium acidaminophilum).